We begin with the raw amino-acid sequence, 327 residues long: MNAYERITRNTAEVVTEEEVRELAEDPEGKRVYVGYEPSGVLHLGHLLTANKLMDLQDAGMEVVVLLADVHAYLNDKGSFEEIRATADQMKAQFLAYGLDEDQTEFVLGSSFQLDEDYELDLHAMQVETSLKRAQRAMAEIQSGETPKVSHVVYPLMQALDIEYLDLDLAIGGMDQRKVHMLAREELPSVGYEKRPVLHTPIIGDLGSGDGKMSSSEGVTISMEDSTADIEEKVTGAFCPQTRDPEGETVNPVLELFQYHVFPRFDEVVVQRPDEYGGDLVYESYEDLADDLESGELHPADAKGALAAALDELIEPGRQRLREIRGE.

Residue Y33 participates in L-tyrosine binding. Positions 38-46 match the 'HIGH' region motif; the sequence is PSGVLHLGH. Residues Y154, Q158, D161, and Q176 each contribute to the L-tyrosine site. The short motif at 212–216 is the 'KMSKS' region element; sequence KMSSS. S215 is a binding site for ATP.

The protein belongs to the class-I aminoacyl-tRNA synthetase family. TyrS type 3 subfamily. As to quaternary structure, homodimer.

It localises to the cytoplasm. The enzyme catalyses tRNA(Tyr) + L-tyrosine + ATP = L-tyrosyl-tRNA(Tyr) + AMP + diphosphate + H(+). In terms of biological role, catalyzes the attachment of tyrosine to tRNA(Tyr) in a two-step reaction: tyrosine is first activated by ATP to form Tyr-AMP and then transferred to the acceptor end of tRNA(Tyr). The polypeptide is Tyrosine--tRNA ligase (Halobacterium salinarum (strain ATCC 29341 / DSM 671 / R1)).